Consider the following 218-residue polypeptide: MKNERALVVFSGGQDSTTCLFQALADYSEVEVVTFNYGQRHAAELDVAREITSELGVKHHELDLSLLSQLTSNSLTDHSQSITTNEDGLPSTFVDGRNHLFLSFAAVLAKGRGIRHIITGVCETDFSGYPDCRDSFIKSLNVTLNLAMDYPFVIHTPLMWLDKKETWALADSLGAFDFVRKRTLTCYNGIIGDGCGDCPACELRKKGLDAYIEEVQHT.

10–20 (FSGGQDSTTCL) provides a ligand contact to ATP. Positions 186, 195, 198, and 201 each coordinate Zn(2+).

The protein belongs to the QueC family. As to quaternary structure, homodimer. Zn(2+) serves as cofactor.

It catalyses the reaction 7-carboxy-7-deazaguanine + NH4(+) + ATP = 7-cyano-7-deazaguanine + ADP + phosphate + H2O + H(+). Its pathway is purine metabolism; 7-cyano-7-deazaguanine biosynthesis. Functionally, catalyzes the ATP-dependent conversion of 7-carboxy-7-deazaguanine (CDG) to 7-cyano-7-deazaguanine (preQ(0)). The protein is 7-cyano-7-deazaguanine synthase of Exiguobacterium sibiricum (strain DSM 17290 / CCUG 55495 / CIP 109462 / JCM 13490 / 255-15).